A 404-amino-acid chain; its full sequence is Tyrosine--tRNA ligase (404 aa).

Positions 45–54 (PTAPDLHLGH) match the 'HIGH' region motif. Residues 229 to 233 (KMSKS) carry the 'KMSKS' region motif. An ATP-binding site is contributed by K232. The S4 RNA-binding domain occupies 342-402 (IFIASIVRLA…GKKAIAQVTF (61 aa)).

The protein belongs to the class-I aminoacyl-tRNA synthetase family. TyrS type 2 subfamily. Homodimer.

It localises to the cytoplasm. It catalyses the reaction tRNA(Tyr) + L-tyrosine + ATP = L-tyrosyl-tRNA(Tyr) + AMP + diphosphate + H(+). Catalyzes the attachment of tyrosine to tRNA(Tyr) in a two-step reaction: tyrosine is first activated by ATP to form Tyr-AMP and then transferred to the acceptor end of tRNA(Tyr). The chain is Tyrosine--tRNA ligase from Acinetobacter baylyi (strain ATCC 33305 / BD413 / ADP1).